We begin with the raw amino-acid sequence, 86 residues long: Kappa-theraphotoxin-Cg1a 2 (86 aa).

An N-terminal signal peptide occupies residues 1–21 (MKVSVVITLAVLGVMFVWASA). The propeptide occupies 22–50 (AELEERGSDQRDSPAWLKSMERIFQSEER). Disulfide bonds link C52-C66, C59-C71, and C65-C78. F84 is modified (phenylalanine amide).

The protein belongs to the neurotoxin 10 (Hwtx-1) family. 28 (Jztx-11) subfamily. Expressed by the venom gland.

The protein resides in the secreted. This toxin acts as a voltage-dependent gating-modifier. It inhibits the sodium conductance (IC(50)=124 nM) and slows the fast inactivation (EC(50)=1180 nM) of Nav1.5/SCN5A. It significantly shifts the activation to more depolarized voltages and decreases the deactivation of Nav1.5 currents upon extreme depolarization, but only slightly affects voltage-dependence of steady-state inactivation. In addition, this toxin causes an approximately five-fold decrease in the rate of recovery from inactivation and an approximately 1.9-fold reduction in the closed-state inactivation rate. This toxin integrates the functions of site 3 toxins (alpha-scorpion toxins) with site 4 toxins (beta-scorpion and spider toxins) by targeting multiple sites on Nav1.5. Also shows inhibition of voltage-gated potassium channels (5 uM completely inhibits Kv2.1/KCNB1, whereas 5 uM moderately inhibits Kv4.2/KCND2 Kv4.1/KCND1 channels). This Chilobrachys guangxiensis (Chinese earth tiger tarantula) protein is Kappa-theraphotoxin-Cg1a 2.